Here is a 203-residue protein sequence, read N- to C-terminus: Cilia- and flagella-associated protein 20 (203 aa).

Belongs to the CFAP20 family.

It is found in the nucleus. The protein resides in the cytoplasm. Its subcellular location is the cytoskeleton. The protein localises to the microtubule organizing center. It localises to the centrosome. It is found in the centriole. The protein resides in the cilium basal body. Its subcellular location is the cilium axoneme. In terms of biological role, cilium- and flagellum-specific protein that plays a role in axonemal structure organization and motility. Microtubule inner protein (MIP) part of the dynein-decorated doublet microtubules (DMTs) in cilia axoneme, which is required for motile cilia beating. Involved in the regulation of the size and morphology of cilia. Required for axonemal microtubules polyglutamylation. This chain is Cilia- and flagella-associated protein 20, found in Caenorhabditis elegans.